Here is a 138-residue protein sequence, read N- to C-terminus: uncharacterized protein (138 aa).

This is an uncharacterized protein from Homo sapiens (Human).